The sequence spans 358 residues: Trans-anol O-methyltransferase 1 (358 aa).

5 residues coordinate S-adenosyl-L-methionine: G201, D224, D244, M245, and R259. H262 acts as the Proton acceptor in catalysis.

This sequence belongs to the class I-like SAM-binding methyltransferase superfamily. Cation-independent O-methyltransferase family. COMT subfamily. As to expression, highly expressed in developing fruits. Expressed at low levels in roots, young leaves, buds and flowers.

It carries out the reaction (E)-anol + S-adenosyl-L-methionine = (E)-anethole + S-adenosyl-L-homocysteine + H(+). It catalyses the reaction (E)-isoeugenol + S-adenosyl-L-methionine = (E)-isomethyleugenol + S-adenosyl-L-homocysteine + H(+). Its pathway is aromatic compound metabolism; phenylpropanoid biosynthesis. Its activity is regulated as follows. Inhibited by zinc and copper. Phenylpropene O-methyltransferase that catalyzes the conversion of trans-anol to trans-anethole and isoeugenol to isomethyleugenol. Phenylpropenes are the primary constituents of various essential plant oils. They are produced as antimicrobial and antianimal compounds, or as floral attractants of pollinators. This Pimpinella anisum (Anise) protein is Trans-anol O-methyltransferase 1 (AIMT1).